The chain runs to 510 residues: NAD(P)H-quinone oxidoreductase subunit 2, chloroplastic (510 aa).

The next 12 membrane-spanning stretches (helical) occupy residues Leu-24–Leu-44, Trp-59–Trp-79, Ile-99–Ile-119, Met-124–Cys-144, Leu-149–Tyr-169, Tyr-183–Gly-203, Ile-229–Phe-249, Trp-295–Ile-315, Met-323–Asp-343, Tyr-354–Leu-374, Ala-395–Phe-415, and Leu-418–Leu-438.

Belongs to the complex I subunit 2 family. NDH is composed of at least 16 different subunits, 5 of which are encoded in the nucleus.

It localises to the plastid. Its subcellular location is the chloroplast thylakoid membrane. The enzyme catalyses a plastoquinone + NADH + (n+1) H(+)(in) = a plastoquinol + NAD(+) + n H(+)(out). It carries out the reaction a plastoquinone + NADPH + (n+1) H(+)(in) = a plastoquinol + NADP(+) + n H(+)(out). Its function is as follows. NDH shuttles electrons from NAD(P)H:plastoquinone, via FMN and iron-sulfur (Fe-S) centers, to quinones in the photosynthetic chain and possibly in a chloroplast respiratory chain. The immediate electron acceptor for the enzyme in this species is believed to be plastoquinone. Couples the redox reaction to proton translocation, and thus conserves the redox energy in a proton gradient. The polypeptide is NAD(P)H-quinone oxidoreductase subunit 2, chloroplastic (Ananas comosus (Pineapple)).